We begin with the raw amino-acid sequence, 162 residues long: Interleukin-15 (162 aa).

The signal sequence occupies residues 1–29 (MKILKPYMRNTSISCYLCFLLNSHFLTEA). A propeptide spanning residues 30–48 (GIHVFILGCVSVGLPKTEA) is cleaved from the precursor. 2 disulfide bridges follow: cysteine 83-cysteine 133 and cysteine 90-cysteine 136. Residues asparagine 104, asparagine 108, and asparagine 119 are each glycosylated (N-linked (GlcNAc...) asparagine).

The protein belongs to the IL-15/IL-21 family.

Its subcellular location is the secreted. Cytokine that plays a major role in the development of inflammatory and protective immune responses to microbial invaders and parasites by modulating immune cells of both the innate and adaptive immune systems. Stimulates the proliferation and activation of natural killer cells, T-cells and B-cells and promotes the secretion of several cytokines. In monocytes, induces the production of IL8 and monocyte chemotactic protein 1/CCL2, two chemokines that attract neutrophils and monocytes respectively to sites of infection. Unlike most cytokines, which are secreted in soluble form, IL15 is expressed in association with its high affinity IL15RA on the surface of IL15-producing cells and delivers signals to target cells that express IL2RB and IL2RG receptor subunits. Binding to its receptor triggers the phosphorylation of JAK1 and JAK3 and the recruitment and subsequent phosphorylation of signal transducer and activator of transcription-3/STAT3 and STAT5. In mast cells, induces the rapid tyrosine phosphorylation of STAT6 and thereby controls mast cell survival and release of cytokines such as IL4. This chain is Interleukin-15 (Il15), found in Mus musculus (Mouse).